The following is a 701-amino-acid chain: Polyribonucleotide nucleotidyltransferase (701 aa).

Positions 487 and 493 each coordinate Mg(2+). Positions 554-613 (PTMIAMKIDTDKIRDVIGKGGATIRAICEETKASIDIEDDGSIKIFGESKEAAEAARQRV) constitute a KH domain. One can recognise an S1 motif domain in the interval 623 to 691 (GKIYVGKVER…NRGRIKLSIK (69 aa)).

Belongs to the polyribonucleotide nucleotidyltransferase family. In terms of assembly, component of the RNA degradosome, which is a multiprotein complex involved in RNA processing and mRNA degradation. It depends on Mg(2+) as a cofactor.

The protein resides in the cytoplasm. It catalyses the reaction RNA(n+1) + phosphate = RNA(n) + a ribonucleoside 5'-diphosphate. Involved in mRNA degradation. Catalyzes the phosphorolysis of single-stranded polyribonucleotides processively in the 3'- to 5'-direction. The polypeptide is Polyribonucleotide nucleotidyltransferase (Pseudomonas savastanoi pv. phaseolicola (strain 1448A / Race 6) (Pseudomonas syringae pv. phaseolicola (strain 1448A / Race 6))).